A 666-amino-acid chain; its full sequence is DNA mismatch repair protein MutL (666 aa).

Belongs to the DNA mismatch repair MutL/HexB family.

In terms of biological role, this protein is involved in the repair of mismatches in DNA. It is required for dam-dependent methyl-directed DNA mismatch repair. May act as a 'molecular matchmaker', a protein that promotes the formation of a stable complex between two or more DNA-binding proteins in an ATP-dependent manner without itself being part of a final effector complex. This Clostridium botulinum (strain Okra / Type B1) protein is DNA mismatch repair protein MutL.